Consider the following 132-residue polypeptide: uncharacterized protein (132 aa).

Residues L10 to D30 traverse the membrane as a helical segment. Residues K50–A79 adopt a coiled-coil conformation.

The protein localises to the membrane. This is an uncharacterized protein from Invertebrate iridescent virus 6 (IIV-6).